A 383-amino-acid polypeptide reads, in one-letter code: Putative glutamate--cysteine ligase 2 (383 aa).

It belongs to the glutamate--cysteine ligase type 2 family. YbdK subfamily.

It catalyses the reaction L-cysteine + L-glutamate + ATP = gamma-L-glutamyl-L-cysteine + ADP + phosphate + H(+). Functionally, ATP-dependent carboxylate-amine ligase which exhibits weak glutamate--cysteine ligase activity. This Legionella pneumophila subsp. pneumophila (strain Philadelphia 1 / ATCC 33152 / DSM 7513) protein is Putative glutamate--cysteine ligase 2.